A 317-amino-acid polypeptide reads, in one-letter code: MLTVPFEEPDMMRESQFGATFTRQEDVRTLSSAELKEAEDDNTDREEEEEREEDENGLPKKKGPRKKKSEGRGDRVKMRRQEANARERSRMHGLNDALESLRKVVPCYSKTQKLSKIETLRLAKNYIWALSETLSAGKRPDLLAFVQTLCKGLSQPTTNLVAGCLQLNARNFLTDHNGDVSFSGRPAYDSLYPYPNAEMATPTGLSSGTRESVKPFRPYNYYASYESYYDSASPESSSPHFDGQMSPPINYNGIFSLKKHDEQVEYSKNCHYGMRYCNVPGRGSMYRVSPDSHFPYDLHPRSQSFQSQDELNTGYHN.

Disordered regions lie at residues 1–90 (MLTV…ERSR) and 297–317 (DLHPRSQSFQSQDELNTGYHN). Residues 37–56 (EAEDDNTDREEEEEREEDEN) show a composition bias toward acidic residues. Basic residues predominate over residues 59 to 69 (PKKKGPRKKKS). The short motif at 65 to 70 (RKKKSE) is the Nuclear localization signal element. Residues 70 to 90 (EGRGDRVKMRRQEANARERSR) are compositionally biased toward basic and acidic residues. In terms of domain architecture, bHLH spans 78-130 (MRRQEANARERSRMHGLNDALESLRKVVPCYSKTQKLSKIETLRLAKNYIWAL). Residues 301-317 (RSQSFQSQDELNTGYHN) show a composition bias toward polar residues.

Efficient DNA binding requires dimerization with another bHLH protein. Embryonic olfactory bulbs and olfactory placodes. In adult, expressed in brain and eye.

It is found in the nucleus. Its function is as follows. Differentiation factor required for neurogenesis. Does not act as an upstream activator of isl1. The polypeptide is Neurogenic differentiation factor 6-B (Danio rerio (Zebrafish)).